The sequence spans 245 residues: Small ribosomal subunit protein uS2 (245 aa).

Belongs to the universal ribosomal protein uS2 family.

The polypeptide is Small ribosomal subunit protein uS2 (Pseudomonas entomophila (strain L48)).